Here is a 1039-residue protein sequence, read N- to C-terminus: RNA-binding protein Unr (1039 aa).

Positions 49 to 62 (TTLGLQPQGQGPSP) are enriched in polar residues. 2 disordered regions span residues 49–126 (TTLG…QQQH) and 165–184 (SIFG…PSQT). Composition is skewed to low complexity over residues 63–80 (QQQQ…QHQQ), 89–126 (QQHM…QQQH), and 165–182 (SIFG…ADPS). The 65-residue stretch at 186–250 (RETGIIEKLL…GKPIASQVSK (65 aa)) folds into the CSD 1 domain. The CSD 2; degenerate domain occupies 261-337 (RVTGTVTTEL…GNLGACHIRL (77 aa)). The region spanning 345–413 (KYRGVVCSMK…GREFACNITR (69 aa)) is the CSD 3 domain. Residues 428–503 (VYKGQVLKSL…RDQLQRATSI (76 aa)) enclose the CSD 4; degenerate domain. A CSD 5 domain is found at 517-585 (REQGTIASLK…SRLQAIRIKH (69 aa)). Residues 593–673 (FETLVASNIE…KECIAVNVQQ (81 aa)) enclose the CSD 6; degenerate domain. The segment at 721 to 741 (QNGYVMHGSPGGSTSSVGSNN) is disordered. Residues 732 to 741 (GSTSSVGSNN) show a composition bias toward low complexity. The 69-residue stretch at 763–831 (VYRGFIAVMK…NCLPAENVRM (69 aa)) folds into the CSD 7 domain. The CSD 8; degenerate domain occupies 846–919 (THNGVVARPL…SGRAACVNAV (74 aa)). In terms of domain architecture, CSD 9 spans 922–987 (KKRATVDSIK…GKSSACNVLK (66 aa)).

Belongs to the UNR family. Interacts with Sxl; cooperates with Sxl to prevent translation of msl-2 transcripts. Interacts with mle; promoting association between mle and roX2 non-coding RNA. Interacts (via CSD domain 7-9) with pAbp; promoting translation inhibition of msl-2 transcripts.

Its subcellular location is the cytoplasm. RNA-binding protein that acts as a regulator of dosage compensation in both males and females. In males, acts as positive regulator of dosage compensation by promoting assembly of the MSL complex, a multiprotein complex that mediates X-chromosome dosage compensation. Promotes MSL complex assembly via association with roX1 and roX2 non-coding RNA components of the MSL complex, facilitating the interaction between non-coding RNAs and mle. In females, acts as an inhibitor of dosage compensation together with Sxl by preventing production of msl-2 protein, an essential component of the MSL complex. Specifically binds to the 3'-UTR of msl-2 transcripts, and cooperates with Sxl to prevent translation initiation of msl-2 transcripts. Mechanistically, Sxl and Unr inhibit translation initiation by preventing ribosome recruitment after pAbp-mediated recruitment of the eIF4F complex. The polypeptide is RNA-binding protein Unr (Drosophila melanogaster (Fruit fly)).